The sequence spans 223 residues: Translation initiation factor 6 (223 aa).

The protein belongs to the eIF-6 family.

In terms of biological role, binds to the 50S ribosomal subunit and prevents its association with the 30S ribosomal subunit to form the 70S initiation complex. This chain is Translation initiation factor 6, found in Thermofilum pendens (strain DSM 2475 / Hrk 5).